A 756-amino-acid chain; its full sequence is U3 small nucleolar RNA-associated protein 14 homolog B (756 aa).

Residues 21–44 (DLPENYPLSTSEDEGDSDGEGKRQ) are disordered. A phosphoserine mark is found at serine 29, serine 31, and serine 37. Coiled coils occupy residues 215–244 (SLEEAKIRRAELQRMRALQSYYEARARREK) and 316–345 (PEARKAMQEQLAKNRELTQKLQVVSESEEE). 2 stretches are compositionally biased toward basic and acidic residues: residues 419 to 428 (KERSFQERVD) and 452 to 468 (LNKESHQSDNQKVSSEE). 2 disordered regions span residues 419–468 (KERS…SSEE) and 497–539 (QQGE…KKKK). A coiled-coil region spans residues 449-476 (LQKLNKESHQSDNQKVSSEENVLHIQRE). Residue serine 554 is modified to Phosphoserine.

Belongs to the UTP14 family. As to expression, expressed predominantly in germ cells of the testis; weakly expressed in brain.

It localises to the nucleus. The protein resides in the nucleolus. Its function is as follows. Essential for spermatogenesis. May be required specifically for ribosome biogenesis and hence protein synthesis during male meiosis. In Mus musculus (Mouse), this protein is U3 small nucleolar RNA-associated protein 14 homolog B (Utp14b).